The primary structure comprises 219 residues: Ribose-5-phosphate isomerase A (219 aa).

Substrate is bound by residues 28-31 (TGST), 81-84 (DGAD), and 94-97 (KGGG). The active-site Proton acceptor is glutamate 103. Lysine 121 is a substrate binding site.

Belongs to the ribose 5-phosphate isomerase family. As to quaternary structure, homodimer.

The enzyme catalyses aldehydo-D-ribose 5-phosphate = D-ribulose 5-phosphate. Its pathway is carbohydrate degradation; pentose phosphate pathway; D-ribose 5-phosphate from D-ribulose 5-phosphate (non-oxidative stage): step 1/1. Functionally, catalyzes the reversible conversion of ribose-5-phosphate to ribulose 5-phosphate. The sequence is that of Ribose-5-phosphate isomerase A from Shewanella oneidensis (strain ATCC 700550 / JCM 31522 / CIP 106686 / LMG 19005 / NCIMB 14063 / MR-1).